The primary structure comprises 90 residues: UPF0298 protein RBAM_014860 (90 aa).

This sequence belongs to the UPF0298 family.

It localises to the cytoplasm. In Bacillus velezensis (strain DSM 23117 / BGSC 10A6 / LMG 26770 / FZB42) (Bacillus amyloliquefaciens subsp. plantarum), this protein is UPF0298 protein RBAM_014860.